The chain runs to 205 residues: Heme ligase (205 aa).

The region spanning 48 to 203 is the FAS1 domain; that stretch reads KRTIINLIYS…GVVHIVDKPI (156 aa). The interval 154–172 is required for binding to host hemoglobin; it reads LRNLLNNDLIVKIEGEFKH. Heme binding domain stretches follow at residues 171–181 and 191–200; these read KHCNHSIYLNG and CHNGVVHIVD.

As to quaternary structure, component of the hemozoin formation complex (HFC) composed of falcipains FP2A and/or FP2B, plasmepsins PMII, PMIII/HAP and PMIV, heme detoxifying protein HDP and falcilysin FLN. The HFC complex is involved in hemoglobin degradation and detoxification of heme in the food vacuole during the asexual blood stage. Interacts with falcipain 2; the interaction is direct and enhances HDP catalytic activity. Interacts with host hemoglobin.

The protein resides in the vacuole. Its subcellular location is the host cytoplasm. It is found in the host cytosol. It catalyses the reaction 2 Fe(III)-heme b = beta-hematin. Its function is as follows. Heme detoxifying enzyme that converts heme to crystalline hemozoin (beta-hematin) to protect the organism from the toxic effects of heme. During its development, P.falciparum proteolyzes vast amounts of host hemoglobin, leading to heme release. This is Heme ligase from Plasmodium falciparum (isolate 3D7).